A 125-amino-acid polypeptide reads, in one-letter code: Small ribosomal subunit protein bS6 (125 aa).

Residues 100–125 (SPMVKAREERKPLTEVENNDFEDAEE) are disordered. Over residues 104–113 (KAREERKPLT) the composition is skewed to basic and acidic residues. Acidic residues predominate over residues 116–125 (ENNDFEDAEE).

It belongs to the bacterial ribosomal protein bS6 family.

Its function is as follows. Binds together with bS18 to 16S ribosomal RNA. The polypeptide is Small ribosomal subunit protein bS6 (Histophilus somni (strain 129Pt) (Haemophilus somnus)).